Reading from the N-terminus, the 68-residue chain is Large ribosomal subunit protein bL31 (68 aa).

4 residues coordinate Zn(2+): cysteine 16, cysteine 18, cysteine 37, and cysteine 40.

This sequence belongs to the bacterial ribosomal protein bL31 family. Type A subfamily. Part of the 50S ribosomal subunit. Zn(2+) is required as a cofactor.

Its function is as follows. Binds the 23S rRNA. The polypeptide is Large ribosomal subunit protein bL31 (Aquifex aeolicus (strain VF5)).